A 127-amino-acid polypeptide reads, in one-letter code: uncharacterized protein (127 aa).

The span at 1 to 13 (MEAGNRSGTPQHR) shows a compositional bias: polar residues. The interval 1–26 (MEAGNRSGTPQHRQLSEIRQDLSSSP) is disordered.

This is an uncharacterized protein from Saccharomyces cerevisiae (strain ATCC 204508 / S288c) (Baker's yeast).